A 133-amino-acid chain; its full sequence is ATP synthase epsilon chain, chloroplastic (133 aa).

Belongs to the ATPase epsilon chain family. As to quaternary structure, F-type ATPases have 2 components, CF(1) - the catalytic core - and CF(0) - the membrane proton channel. CF(1) has five subunits: alpha(3), beta(3), gamma(1), delta(1), epsilon(1). CF(0) has three main subunits: a, b and c.

Its subcellular location is the plastid. The protein localises to the chloroplast thylakoid membrane. Its function is as follows. Produces ATP from ADP in the presence of a proton gradient across the membrane. The polypeptide is ATP synthase epsilon chain, chloroplastic (Daucus carota (Wild carrot)).